The sequence spans 329 residues: Ketol-acid reductoisomerase (NADP(+)) (329 aa).

Residues 1-181 (MKVYYEQDAN…GGTRSGVIET (181 aa)) enclose the KARI N-terminal Rossmann domain. NADP(+) is bound by residues 24 to 27 (YGSQ), Arg-47, and 82 to 85 (DQYQ). His-107 is a catalytic residue. Residue Gly-133 participates in NADP(+) binding. Residues 182-327 (TFREETETDL…ARLRSMMPWL (146 aa)) form the KARI C-terminal knotted domain. Mg(2+) is bound by residues Asp-190, Glu-194, Glu-226, and Glu-230. Position 251 (Ser-251) interacts with substrate.

Belongs to the ketol-acid reductoisomerase family. Requires Mg(2+) as cofactor.

It catalyses the reaction (2R)-2,3-dihydroxy-3-methylbutanoate + NADP(+) = (2S)-2-acetolactate + NADPH + H(+). It carries out the reaction (2R,3R)-2,3-dihydroxy-3-methylpentanoate + NADP(+) = (S)-2-ethyl-2-hydroxy-3-oxobutanoate + NADPH + H(+). Its pathway is amino-acid biosynthesis; L-isoleucine biosynthesis; L-isoleucine from 2-oxobutanoate: step 2/4. It participates in amino-acid biosynthesis; L-valine biosynthesis; L-valine from pyruvate: step 2/4. Functionally, involved in the biosynthesis of branched-chain amino acids (BCAA). Catalyzes an alkyl-migration followed by a ketol-acid reduction of (S)-2-acetolactate (S2AL) to yield (R)-2,3-dihydroxy-isovalerate. In the isomerase reaction, S2AL is rearranged via a Mg-dependent methyl migration to produce 3-hydroxy-3-methyl-2-ketobutyrate (HMKB). In the reductase reaction, this 2-ketoacid undergoes a metal-dependent reduction by NADPH to yield (R)-2,3-dihydroxy-isovalerate. The protein is Ketol-acid reductoisomerase (NADP(+)) of Oleidesulfovibrio alaskensis (strain ATCC BAA-1058 / DSM 17464 / G20) (Desulfovibrio alaskensis).